The following is a 162-amino-acid chain: Transcription elongation factor GreA (162 aa).

Positions 45–75 form a coiled coil; it reads ENAEYEAAREKQAFIEGRIKELEDMAARAEI.

Belongs to the GreA/GreB family.

Functionally, necessary for efficient RNA polymerase transcription elongation past template-encoded arresting sites. The arresting sites in DNA have the property of trapping a certain fraction of elongating RNA polymerases that pass through, resulting in locked ternary complexes. Cleavage of the nascent transcript by cleavage factors such as GreA or GreB allows the resumption of elongation from the new 3'terminus. GreA releases sequences of 2 to 3 nucleotides. The protein is Transcription elongation factor GreA of Rickettsia canadensis (strain McKiel).